A 368-amino-acid polypeptide reads, in one-letter code: Ferrochelatase (368 aa).

Positions 209 and 290 each coordinate Fe cation.

This sequence belongs to the ferrochelatase family.

Its subcellular location is the cytoplasm. The catalysed reaction is heme b + 2 H(+) = protoporphyrin IX + Fe(2+). The protein operates within porphyrin-containing compound metabolism; protoheme biosynthesis; protoheme from protoporphyrin-IX: step 1/1. Functionally, catalyzes the ferrous insertion into protoporphyrin IX. This is Ferrochelatase from Herminiimonas arsenicoxydans.